The sequence spans 251 residues: 14-3-3-like protein (251 aa).

Belongs to the 14-3-3 family.

In Fucus vesiculosus (Bladder wrack), this protein is 14-3-3-like protein.